The following is an 88-amino-acid chain: uncharacterized protein (88 aa).

Positions 1-25 (MRAAFWVGCAALLLSACSSEPVQQA) are cleaved as a signal peptide.

This is an uncharacterized protein from Escherichia coli O6:H1 (strain CFT073 / ATCC 700928 / UPEC).